The chain runs to 348 residues: Dihydroorotase (348 aa).

Residues H17 and H19 each coordinate Zn(2+). Substrate is bound by residues H19–R21 and N45. 3 residues coordinate Zn(2+): K103, H140, and H178. K103 carries the N6-carboxylysine modification. H140 is a binding site for substrate. L223 contacts substrate. D251 provides a ligand contact to Zn(2+). The active site involves D251. 2 residues coordinate substrate: H255 and A267.

Belongs to the metallo-dependent hydrolases superfamily. DHOase family. Class II DHOase subfamily. Homodimer. Requires Zn(2+) as cofactor.

The catalysed reaction is (S)-dihydroorotate + H2O = N-carbamoyl-L-aspartate + H(+). It functions in the pathway pyrimidine metabolism; UMP biosynthesis via de novo pathway; (S)-dihydroorotate from bicarbonate: step 3/3. Catalyzes the reversible cyclization of carbamoyl aspartate to dihydroorotate. This Yersinia enterocolitica serotype O:8 / biotype 1B (strain NCTC 13174 / 8081) protein is Dihydroorotase.